The following is a 295-amino-acid chain: Small ribosomal subunit protein uS2 (295 aa).

Serine 2 is subject to N-acetylserine. Serine 43 is modified (phosphoserine). Residue lysine 52 is modified to N6-acetyllysine. Positions 54–113 are interaction with PPP1R16B; it reads TWEKLLLAARAIVAIENPADVSVISSRNTGQRAVLKFAAATGATPIAGRFTPGTFTNQIQ. Lysine 89 is subject to N6-acetyllysine; alternate. Lysine 89 is covalently cross-linked (Glycyl lysine isopeptide (Lys-Gly) (interchain with G-Cter in SUMO2); alternate). Threonine 97 carries the phosphothreonine modification. Laminin-binding regions lie at residues 161–180 and 205–229; these read IPCNNKGAHSVGLMWWMLAR and RDPEEIEKEEQAAAEKAVTKEEFQG. The segment covering 214–227 has biased composition (basic and acidic residues); that stretch reads EQAAAEKAVTKEEF. The tract at residues 214–240 is disordered; it reads EQAAAEKAVTKEEFQGEWTAPAPEFTA. [DE]-W-[ST] repeat units lie at residues 230–232, 247–249, 266–268, and 275–277; these read EWT and DWS. Residues 242 to 295 are laminin-binding; sequence QPEVADWSEGVQVPSVPIQQFPTEDWSARPFTEDWSAAPTAQATEWVGTTSELS. The interval 263 to 295 is disordered; that stretch reads PTEDWSARPFTEDWSAAPTAQATEWVGTTSELS. Over residues 280-295 the composition is skewed to polar residues; the sequence is PTAQATEWVGTTSELS.

This sequence belongs to the universal ribosomal protein uS2 family. In terms of assembly, monomer (37LRP) and homodimer (67LR). Component of the small ribosomal subunit. Mature ribosomes consist of a small (40S) and a large (60S) subunit. The 40S subunit contains about 33 different proteins and 1 molecule of RNA (18S). The 60S subunit contains about 49 different proteins and 3 molecules of RNA (28S, 5.8S and 5S). Interacts with RPS21. Interacts with several laminins including at least LAMB1. Interacts with MDK. The mature dimeric form interacts with PPP1R16B (via its fourth ankyrin repeat). Interacts with PPP1CA only in the presence of PPP1R16B. In terms of processing, acylated. Acylation may be a prerequisite for conversion of the monomeric 37 kDa laminin receptor precursor (37LRP) to the mature dimeric 67 kDa laminin receptor (67LR), and may provide a mechanism for membrane association. Post-translationally, cleaved by stromelysin-3 (ST3) at the cell surface. Cleavage by stromelysin-3 may be a mechanism to alter cell-extracellular matrix interactions.

It is found in the cell membrane. The protein localises to the cytoplasm. Its subcellular location is the nucleus. Its function is as follows. Required for the assembly and/or stability of the 40S ribosomal subunit. Required for the processing of the 20S rRNA-precursor to mature 18S rRNA in a late step of the maturation of 40S ribosomal subunits. Also functions as a cell surface receptor for laminin. Plays a role in cell adhesion to the basement membrane and in the consequent activation of signaling transduction pathways. May play a role in cell fate determination and tissue morphogenesis. Also acts as a receptor for several other ligands, including the pathogenic prion protein, viruses, and bacteria. Acts as a PPP1R16B-dependent substrate of PPP1CA. The sequence is that of Small ribosomal subunit protein uS2 from Ovis aries (Sheep).